The chain runs to 839 residues: Probable beta-glucosidase I (839 aa).

N-linked (GlcNAc...) asparagine glycosylation is present at Asn197. Asp225 is a catalytic residue. The PA14 domain maps to 395–555 (DGKKGFSFRV…SQEELIAKAA (161 aa)).

This sequence belongs to the glycosyl hydrolase 3 family.

Its subcellular location is the secreted. The catalysed reaction is Hydrolysis of terminal, non-reducing beta-D-glucosyl residues with release of beta-D-glucose.. It participates in glycan metabolism; cellulose degradation. In terms of biological role, beta-glucosidases are one of a number of cellulolytic enzymes involved in the degradation of cellulosic biomass. Catalyzes the last step releasing glucose from the inhibitory cellobiose. In Aspergillus terreus (strain NIH 2624 / FGSC A1156), this protein is Probable beta-glucosidase I (bglI).